A 413-amino-acid chain; its full sequence is 3-oxo-tetronate kinase (413 aa).

Residues serine 254, 354–357, and glycine 397 contribute to the ATP site; that span reads GGET.

The protein belongs to the four-carbon acid sugar kinase family.

The catalysed reaction is 3-dehydro-L-erythronate + ATP = 3-dehydro-4-O-phospho-L-erythronate + ADP + H(+). It carries out the reaction 3-dehydro-D-erythronate + ATP = 3-dehydro-4-O-phospho-D-erythronate + ADP + H(+). Catalyzes the ATP-dependent phosphorylation of 3-oxo-tetronate to 3-oxo-tetronate 4-phosphate. The polypeptide is 3-oxo-tetronate kinase (Haemophilus influenzae (strain ATCC 51907 / DSM 11121 / KW20 / Rd)).